Here is a 27-residue protein sequence, read N- to C-terminus: MIDKAIIVLGALIALLELIRFLLQLLN.

The chain crosses the membrane as a helical span at residues 6 to 26 (IIVLGALIALLELIRFLLQLL).

It belongs to the DinQ family.

The protein localises to the cell inner membrane. This is an uncharacterized protein from Escherichia coli (strain K12).